The following is a 196-amino-acid chain: Dual-action ribosomal maturation protein DarP (196 aa).

It belongs to the DarP family.

The protein resides in the cytoplasm. In terms of biological role, member of a network of 50S ribosomal subunit biogenesis factors which assembles along the 30S-50S interface, preventing incorrect 23S rRNA structures from forming. Promotes peptidyl transferase center (PTC) maturation. This Stenotrophomonas maltophilia (strain R551-3) protein is Dual-action ribosomal maturation protein DarP.